The sequence spans 253 residues: Tetraspanin-11 (253 aa).

The next 3 membrane-spanning stretches (helical) occupy residues 19–39, 63–83, and 93–113; these read LLFV…AVGI, ILIF…GAIL, and YFCL…LAHV. N-linked (GlcNAc...) asparagine glycosylation occurs at Asn127. A helical membrane pass occupies residues 220-240; sequence LLLMGAVGIGVACLQICGMVL.

Belongs to the tetraspanin (TM4SF) family.

Its subcellular location is the membrane. The chain is Tetraspanin-11 (TSPAN11) from Homo sapiens (Human).